The sequence spans 344 residues: Arginine N-succinyltransferase (344 aa).

L125 contacts succinyl-CoA. H229 functions as the Proton donor in the catalytic mechanism.

The protein belongs to the arginine N-succinyltransferase family.

It carries out the reaction succinyl-CoA + L-arginine = N(2)-succinyl-L-arginine + CoA + H(+). The protein operates within amino-acid degradation; L-arginine degradation via AST pathway; L-glutamate and succinate from L-arginine: step 1/5. In terms of biological role, catalyzes the transfer of succinyl-CoA to arginine to produce N(2)-succinylarginine. This chain is Arginine N-succinyltransferase, found in Shigella dysenteriae serotype 1 (strain Sd197).